The primary structure comprises 201 residues: dTTP/UTP pyrophosphatase (201 aa).

Asp-81 serves as the catalytic Proton acceptor.

Belongs to the Maf family. YhdE subfamily. The cofactor is a divalent metal cation.

It localises to the cytoplasm. It catalyses the reaction dTTP + H2O = dTMP + diphosphate + H(+). The enzyme catalyses UTP + H2O = UMP + diphosphate + H(+). Nucleoside triphosphate pyrophosphatase that hydrolyzes dTTP and UTP. May have a dual role in cell division arrest and in preventing the incorporation of modified nucleotides into cellular nucleic acids. The polypeptide is dTTP/UTP pyrophosphatase (Bordetella avium (strain 197N)).